Consider the following 200-residue polypeptide: Putative 3-methyladenine DNA glycosylase (200 aa).

Belongs to the DNA glycosylase MPG family.

The sequence is that of Putative 3-methyladenine DNA glycosylase from Bradyrhizobium diazoefficiens (strain JCM 10833 / BCRC 13528 / IAM 13628 / NBRC 14792 / USDA 110).